A 168-amino-acid polypeptide reads, in one-letter code: Phosphopantetheine adenylyltransferase (168 aa).

Ser-9 is a substrate binding site. Residues 9–10 and His-17 each bind ATP; that span reads SF. Substrate-binding residues include Lys-41, Leu-73, and Arg-87. Residues 88 to 90, Glu-98, and 123 to 129 each bind ATP; these read GMR and WIYTSSS.

Belongs to the bacterial CoaD family. Homohexamer. It depends on Mg(2+) as a cofactor.

Its subcellular location is the cytoplasm. The enzyme catalyses (R)-4'-phosphopantetheine + ATP + H(+) = 3'-dephospho-CoA + diphosphate. It participates in cofactor biosynthesis; coenzyme A biosynthesis; CoA from (R)-pantothenate: step 4/5. Its function is as follows. Reversibly transfers an adenylyl group from ATP to 4'-phosphopantetheine, yielding dephospho-CoA (dPCoA) and pyrophosphate. This Desulfosudis oleivorans (strain DSM 6200 / JCM 39069 / Hxd3) (Desulfococcus oleovorans) protein is Phosphopantetheine adenylyltransferase.